The sequence spans 253 residues: Allene oxide cyclase 2, chloroplastic (253 aa).

The transit peptide at 1–77 (MASSAVSLQS…SQNGNIENPR (77 aa)) directs the protein to the chloroplast.

This sequence belongs to the allene oxide cyclase family. Highly expressed in fully developed leaves.

The protein resides in the plastid. It localises to the chloroplast. The enzyme catalyses (9Z,13S,15Z)-12,13-epoxyoctadeca-9,11,15-trienoate = (9S,13S,15Z)-12-oxophyto-10,15-dienoate. Its function is as follows. Involved in the production of 12-oxo-phytodienoic acid (OPDA), a precursor of jasmonic acid. This Arabidopsis thaliana (Mouse-ear cress) protein is Allene oxide cyclase 2, chloroplastic (AOC2).